The following is a 470-amino-acid chain: ATP synthase subunit beta (470 aa).

148–155 (GGAGVGKT) provides a ligand contact to ATP.

This sequence belongs to the ATPase alpha/beta chains family. F-type ATPases have 2 components, CF(1) - the catalytic core - and CF(0) - the membrane proton channel. CF(1) has five subunits: alpha(3), beta(3), gamma(1), delta(1), epsilon(1). CF(0) has three main subunits: a(1), b(2) and c(9-12). The alpha and beta chains form an alternating ring which encloses part of the gamma chain. CF(1) is attached to CF(0) by a central stalk formed by the gamma and epsilon chains, while a peripheral stalk is formed by the delta and b chains.

It localises to the cell inner membrane. The enzyme catalyses ATP + H2O + 4 H(+)(in) = ADP + phosphate + 5 H(+)(out). Its function is as follows. Produces ATP from ADP in the presence of a proton gradient across the membrane. The catalytic sites are hosted primarily by the beta subunits. The sequence is that of ATP synthase subunit beta from Teredinibacter turnerae (strain ATCC 39867 / T7901).